The primary structure comprises 122 residues: Large ribosomal subunit protein bL12 (122 aa).

It belongs to the bacterial ribosomal protein bL12 family. As to quaternary structure, homodimer. Part of the ribosomal stalk of the 50S ribosomal subunit. Forms a multimeric L10(L12)X complex, where L10 forms an elongated spine to which 2 to 4 L12 dimers bind in a sequential fashion. Binds GTP-bound translation factors.

Functionally, forms part of the ribosomal stalk which helps the ribosome interact with GTP-bound translation factors. Is thus essential for accurate translation. The chain is Large ribosomal subunit protein bL12 from Xylella fastidiosa (strain M12).